Reading from the N-terminus, the 614-residue chain is Dihydroxy-acid dehydratase (614 aa).

Asp81 is a Mg(2+) binding site. Cys122 serves as a coordination point for [2Fe-2S] cluster. Asp123 and Lys124 together coordinate Mg(2+). Lys124 is modified (N6-carboxylysine). Cys196 lines the [2Fe-2S] cluster pocket. Mg(2+) is bound at residue Glu492. The active-site Proton acceptor is Ser518.

The protein belongs to the IlvD/Edd family. As to quaternary structure, homodimer. Requires [2Fe-2S] cluster as cofactor. Mg(2+) is required as a cofactor.

The catalysed reaction is (2R)-2,3-dihydroxy-3-methylbutanoate = 3-methyl-2-oxobutanoate + H2O. It catalyses the reaction (2R,3R)-2,3-dihydroxy-3-methylpentanoate = (S)-3-methyl-2-oxopentanoate + H2O. It functions in the pathway amino-acid biosynthesis; L-isoleucine biosynthesis; L-isoleucine from 2-oxobutanoate: step 3/4. It participates in amino-acid biosynthesis; L-valine biosynthesis; L-valine from pyruvate: step 3/4. Its function is as follows. Functions in the biosynthesis of branched-chain amino acids. Catalyzes the dehydration of (2R,3R)-2,3-dihydroxy-3-methylpentanoate (2,3-dihydroxy-3-methylvalerate) into 2-oxo-3-methylpentanoate (2-oxo-3-methylvalerate) and of (2R)-2,3-dihydroxy-3-methylbutanoate (2,3-dihydroxyisovalerate) into 2-oxo-3-methylbutanoate (2-oxoisovalerate), the penultimate precursor to L-isoleucine and L-valine, respectively. This Ruegeria sp. (strain TM1040) (Silicibacter sp.) protein is Dihydroxy-acid dehydratase.